Here is a 261-residue protein sequence, read N- to C-terminus: 3-deoxy-manno-octulosonate cytidylyltransferase 1 (261 aa).

The protein belongs to the KdsB family.

The protein localises to the cytoplasm. It carries out the reaction 3-deoxy-alpha-D-manno-oct-2-ulosonate + CTP = CMP-3-deoxy-beta-D-manno-octulosonate + diphosphate. It functions in the pathway nucleotide-sugar biosynthesis; CMP-3-deoxy-D-manno-octulosonate biosynthesis; CMP-3-deoxy-D-manno-octulosonate from 3-deoxy-D-manno-octulosonate and CTP: step 1/1. The protein operates within bacterial outer membrane biogenesis; lipopolysaccharide biosynthesis. Its function is as follows. Activates KDO (a required 8-carbon sugar) for incorporation into bacterial lipopolysaccharide in Gram-negative bacteria. This chain is 3-deoxy-manno-octulosonate cytidylyltransferase 1, found in Burkholderia lata (strain ATCC 17760 / DSM 23089 / LMG 22485 / NCIMB 9086 / R18194 / 383).